Consider the following 543-residue polypeptide: Ipecoside beta-D-glucosidase IpeGLU1 (543 aa).

A beta-D-glucoside is bound by residues glutamine 36, histidine 140, 185-186 (NE), tyrosine 350, glutamate 422, tryptophan 471, and phenylalanine 487. The active-site Proton donor is the glutamate 186. The Nucleophile role is filled by glutamate 422.

The protein belongs to the glycosyl hydrolase 1 family. Expressed in roots.

The protein resides in the cytoplasm. It is found in the cytosol. It catalyses the reaction deacetylipecoside + H2O = deacetylipecoside aglycone + D-glucose. It carries out the reaction deacetylisoipecoside + H2O = deacetylisoipecoside aglycone + D-glucose. The catalysed reaction is 6-O-methyldeacetylipecoside + H2O = 6-O-methyldeacetylipecoside aglycone + D-glucose. The enzyme catalyses 6-O-methyldeacetylisoipecoside + H2O = 6-O-methyldeacetylisoipecoside aglycone + D-glucose. It catalyses the reaction ipecoside + H2O = ipecoside aglycone + D-glucose. It carries out the reaction 3alpha(S)-strictosidine + H2O = strictosidine aglycone + D-glucose. Its pathway is alkaloid biosynthesis. Inhibited by Cu(2+), Fe(2+) and Zn(2+). Functionally, beta-glucosidase involved in the biosynthesis of ipecac and benzylisoquinoline monoterpenoid-isoquinoline alkaloids natural products, starting by the condensation of dopamine and secologanin, and including emetine and cephaeline, drugs used both as anti-protozoal (e.g. treatment of ameobiasis) and as emetic agents. In response to pathogen and herbivore attack, triggers the release of toxic ipecoside aglycon to trigger defense responses. Catalyzes deglucosylation both on (1S)-diastereomer and (1R)-diastereomer substrates, including ipecoside, the main alkaloidal glucoside. Also active on N-deacetylisoipecoside, 6-O-methyl-N-deacetylisoipecoside, 6-O-methyl-N-deacetylipecoside and N-deacetylipecoside. In Carapichea ipecacuanha (Ipecac), this protein is Ipecoside beta-D-glucosidase IpeGLU1.